Here is a 283-residue protein sequence, read N- to C-terminus: V-set domain containing T-cell activation inhibitor 1 (283 aa).

A signal peptide spans 1-24 (MASLGQIIFWSIINIIIILAGAIA). Ig-like V-type domains follow at residues 35–144 (HFIT…ANLE) and 153–241 (PEIN…IKVT). 2 disulfides stabilise this stretch: Cys56–Cys130 and Cys168–Cys225. Asn216 carries an N-linked (GlcNAc...) asparagine glycan. Gly257 carries the GPI-anchor amidated glycine lipid modification. Positions 258 to 283 (PSPCVFSSAFVAGWALLSLSCCLMLR) are cleaved as a propeptide — removed in mature form.

It belongs to the immunoglobulin superfamily. BTN/MOG family. In terms of processing, N-glycosylated. Expressed on the surface of professional antigen-presenting cells (at protein level). Widely expressed, including in kidney, liver, lung, pancreas, placenta, prostate, spleen, testis and thymus.

The protein localises to the cell membrane. Functionally, negatively regulates T-cell-mediated immune response by inhibiting T-cell activation, proliferation, cytokine production and development of cytotoxicity. When expressed on the cell surface of tumor macrophages, plays an important role, together with regulatory T-cells (Treg), in the suppression of tumor-associated antigen-specific T-cell immunity. Involved in promoting epithelial cell transformation. This Mus musculus (Mouse) protein is V-set domain containing T-cell activation inhibitor 1.